The primary structure comprises 87 residues: Small ribosomal subunit protein bS16c (87 aa).

Belongs to the bacterial ribosomal protein bS16 family.

It is found in the plastid. It localises to the chloroplast. This Zygnema circumcarinatum (Green alga) protein is Small ribosomal subunit protein bS16c.